Reading from the N-terminus, the 148-residue chain is Histone H2B.1 (148 aa).

Basic and acidic residues predominate over residues 1–35 (MAPRAEKKPAEKKTAAERPVEENKAAEKAPAEKKP). The segment at 1–56 (MAPRAEKKPAEKKTAAERPVEENKAAEKAPAEKKPKAGKKLPPKEAGDKKKKRSKK) is disordered. At Ala-2 the chain carries N,N,N-trimethylalanine; alternate. Ala-2 bears the N,N-dimethylalanine; alternate mark. At Ala-2 the chain carries N-methylalanine; alternate. At Lys-7 the chain carries N6-acetyllysine; partial. Lys-12 is modified (N6-acetyllysine). Lys-13 carries the post-translational modification N6,N6-dimethyllysine. 3 positions are modified to N6-acetyllysine: Lys-28, Lys-33, and Lys-39. An N6-acetyllysine; partial modification is found at Lys-40. Lys-144 participates in a covalent cross-link: Glycyl lysine isopeptide (Lys-Gly) (interchain with G-Cter in ubiquitin).

The protein belongs to the histone H2B family. The nucleosome is a histone octamer containing two molecules each of H2A, H2B, H3 and H4 assembled in one H3-H4 heterotetramer and two H2A-H2B heterodimers. The octamer wraps approximately 147 bp of DNA. Interacts with AHL27. Post-translationally, can be acetylated to form H2BK6ac, H2BK33ac and H2BK34ac. Mono-, di- or trimethylated at the N-terminus to form H2BA1me1/2/3. H2BA1me2 may be acetylated to form H2BA1me2K6ac. In terms of processing, monoubiquitinated by BRE1 to form H2BK143ub1 and deubiquitinated by UBP26. Required for heterochromatic histone H3 di- and trimethylation at H3K4me. May give a specific tag for epigenetic transcriptional activation.

It is found in the nucleus. The protein localises to the chromosome. Functionally, core component of nucleosome. Nucleosomes wrap and compact DNA into chromatin, limiting DNA accessibility to the cellular machineries which require DNA as a template. Histones thereby play a central role in transcription regulation, DNA repair, DNA replication and chromosomal stability. DNA accessibility is regulated via a complex set of post-translational modifications of histones, also called histone code, and nucleosome remodeling. The sequence is that of Histone H2B.1 from Arabidopsis thaliana (Mouse-ear cress).